Reading from the N-terminus, the 241-residue chain is 3-oxoacyl-[acyl-carrier-protein] reductase FabG (241 aa).

Residues 13-16, Ser38, 57-58, and Asn83 contribute to the NADP(+) site; these read GASG and KV. Ser135 is a substrate binding site. Catalysis depends on Tyr148, which acts as the Proton acceptor. Residues 148–152 and Ile181 each bind NADP(+); that span reads YCASK.

Belongs to the short-chain dehydrogenases/reductases (SDR) family. In terms of assembly, homotetramer.

The enzyme catalyses a (3R)-hydroxyacyl-[ACP] + NADP(+) = a 3-oxoacyl-[ACP] + NADPH + H(+). It functions in the pathway lipid metabolism; fatty acid biosynthesis. In terms of biological role, catalyzes the NADPH-dependent reduction of beta-ketoacyl-ACP substrates to beta-hydroxyacyl-ACP products, the first reductive step in the elongation cycle of fatty acid biosynthesis. The protein is 3-oxoacyl-[acyl-carrier-protein] reductase FabG (fabG) of Rickettsia bellii (strain RML369-C).